The sequence spans 525 residues: NGFI-A-binding protein 2 (525 aa).

The tract at residues 1 to 31 is disordered; it reads MHRAPSPTAEQPPGRGDNTRRTPQPRFKASA. Ser6 carries the phosphoserine modification. Residues 35-113 are NCD1; that stretch reads ALPRTLGELQ…REWATNPGLF (79 aa). The interval 135–238 is disordered; it reads GTRKGSMSNG…GAGGGPDRLE (104 aa). 4 positions are modified to phosphoserine: Ser157, Ser159, Ser162, and Ser171. The span at 212-234 shows a compositional bias: gly residues; sequence AGGGVSEGPGVGGVAAGGAGGGP. Residues 267–356 form an NCD2 region; the sequence is LLKLNKKLAR…SRQVARESTY (90 aa). Positions 353–384 are necessary for nuclear localization; it reads ESTYLSSLKGSRLHSEELGGPPLKKLKQEVGE. A Glycyl lysine isopeptide (Lys-Gly) (interchain with G-Cter in SUMO1) cross-link involves residue Lys379. The interval 381–416 is disordered; it reads EVGEQSHNEIQQPPPGPESYAPPYRPSLEEDSASLS. A Phosphoserine modification is found at Ser479. The interval 501–525 is disordered; the sequence is APGPHPALVEGRRSSVKVEAEASRQ. Residues 510–525 show a composition bias toward basic and acidic residues; that stretch reads EGRRSSVKVEAEASRQ. Lys517 is covalently cross-linked (Glycyl lysine isopeptide (Lys-Gly) (interchain with G-Cter in SUMO1); alternate). A Glycyl lysine isopeptide (Lys-Gly) (interchain with G-Cter in SUMO2); alternate cross-link involves residue Lys517.

This sequence belongs to the NAB family. In terms of assembly, homomultimers may associate with EGR1 bound to DNA. Sumoylation by EGR2 represses EGR2 transcriptional activity in hindbrain. As to expression, highly expressed in brain and thymus, and at lower levels in spleen, kidney, heart and testis. Isoform 1 is predominantly expressed in testis, whereas isoform 3 is more abundant in thymus.

It localises to the nucleus. Functionally, acts as a transcriptional repressor for zinc finger transcription factors EGR1 and EGR2. Isoform 2 lacks repression ability. The protein is NGFI-A-binding protein 2 (Nab2) of Mus musculus (Mouse).